An 80-amino-acid chain; its full sequence is uncharacterized protein (80 aa).

2 consecutive transmembrane segments (helical) span residues 15 to 35 (ALGL…LSGV) and 45 to 65 (WFEM…WAMV).

To H.influenzae HI_0974B.

The protein resides in the cell membrane. This is an uncharacterized protein from Escherichia coli (strain K12).